The primary structure comprises 208 residues: Putative dioxygenase RC0543 (208 aa).

Belongs to the intradiol ring-cleavage dioxygenase family.

This is Putative dioxygenase RC0543 from Rickettsia conorii (strain ATCC VR-613 / Malish 7).